The sequence spans 302 residues: Probable 2-(5''-triphosphoribosyl)-3'-dephosphocoenzyme-A synthase 1 (302 aa).

Belongs to the CitG/MdcB family.

It carries out the reaction 3'-dephospho-CoA + ATP = 2'-(5''-triphospho-alpha-D-ribosyl)-3'-dephospho-CoA + adenine. The sequence is that of Probable 2-(5''-triphosphoribosyl)-3'-dephosphocoenzyme-A synthase 1 from Salmonella typhimurium (strain LT2 / SGSC1412 / ATCC 700720).